The primary structure comprises 379 residues: Cytochrome b (379 aa).

The next 4 membrane-spanning stretches (helical) occupy residues 33–53 (FGSL…FLAM), 77–98 (WLIR…FIHV), 113–133 (WNIG…GYVL), and 178–198 (FFAF…VHLL). Residues H83 and H97 each contribute to the heme b site. H182 and H196 together coordinate heme b. H201 is an a ubiquinone binding site. Helical transmembrane passes span 226-246 (IKDL…TLFF), 288-308 (LGGV…PLLN), 320-340 (VTQV…WIGG), and 347-367 (FTMI…ILIP).

The protein belongs to the cytochrome b family. As to quaternary structure, the cytochrome bc1 complex contains 11 subunits: 3 respiratory subunits (MT-CYB, CYC1 and UQCRFS1), 2 core proteins (UQCRC1 and UQCRC2) and 6 low-molecular weight proteins (UQCRH/QCR6, UQCRB/QCR7, UQCRQ/QCR8, UQCR10/QCR9, UQCR11/QCR10 and a cleavage product of UQCRFS1). This cytochrome bc1 complex then forms a dimer. The cofactor is heme b.

The protein resides in the mitochondrion inner membrane. Component of the ubiquinol-cytochrome c reductase complex (complex III or cytochrome b-c1 complex) that is part of the mitochondrial respiratory chain. The b-c1 complex mediates electron transfer from ubiquinol to cytochrome c. Contributes to the generation of a proton gradient across the mitochondrial membrane that is then used for ATP synthesis. This is Cytochrome b (MT-CYB) from Akodon subfuscus (Puno grass mouse).